A 103-amino-acid chain; its full sequence is UPF0473 protein LVIS_1220 (103 aa).

It belongs to the UPF0473 family.

This Levilactobacillus brevis (strain ATCC 367 / BCRC 12310 / CIP 105137 / JCM 1170 / LMG 11437 / NCIMB 947 / NCTC 947) (Lactobacillus brevis) protein is UPF0473 protein LVIS_1220.